The sequence spans 172 residues: dCTP deaminase (172 aa).

Residues 97 to 102 (RSSFAR) and D113 each bind dCTP. The Proton donor/acceptor role is filled by E123. Positions 155 and 162 each coordinate dCTP.

This sequence belongs to the dCTP deaminase family. As to quaternary structure, homotrimer.

The enzyme catalyses dCTP + H2O + H(+) = dUTP + NH4(+). The protein operates within pyrimidine metabolism; dUMP biosynthesis; dUMP from dCTP (dUTP route): step 1/2. Functionally, catalyzes the deamination of dCTP to dUTP. This Metallosphaera sedula (strain ATCC 51363 / DSM 5348 / JCM 9185 / NBRC 15509 / TH2) protein is dCTP deaminase.